The following is a 227-amino-acid chain: Lysosomal-associated transmembrane protein 4B (227 aa).

Helical transmembrane passes span 26-46, 72-92, 100-120, and 153-173; these read ILLG…LLSA, MCIA…ATYG, WIIP…LVAI, and CLVL…GYLI. Residues 205–222 are required for NEDD4 interaction; sequence PPYDDATAVPSTAKEPPP.

This sequence belongs to the LAPTM4/LAPTM5 transporter family. In terms of assembly, homooligomer; upon reaching the lysosomes. Interacts with MCOLN1. Interacts with NEDD4; may play a role in the lysosomal sorting of LAPTM4B; enhances HGS association with NEDD4; mediates inhibition of EGFR degradation. Interacts with PIP5K1C; promotes SNX5 association with LAPTM4B; kinase activity of PIP5K1C is required; interaction is regulated by phosphatidylinositol 4,5-bisphosphate generated by PIP5K1C. Interacts with HGS; promotes HGS ubiquitination. Interacts with SNX5. Interacts with SLC3A2 and SLC7A5; recruits SLC3A2 and SLC7A5 to lysosomes to promote leucine uptake into these organelles and is required for mTORC1 activation. Interacts with LRRC32; decreases TGFB1 production in regulatory T cells. Interacts with BECN1; competes with EGFR for LAPTM4B binding; regulates EGFR activity. Interacts with EGFR; positively correlates with EGFR activation. Undergoes proteolytic cleavage following delivery to the lysosomes. In terms of processing, ubiquitinated by NEDD4.

It localises to the endomembrane system. It is found in the late endosome membrane. The protein localises to the cell membrane. Its subcellular location is the cell projection. The protein resides in the lysosome membrane. It localises to the endosome membrane. It is found in the endosome. The protein localises to the multivesicular body membrane. Its subcellular location is the multivesicular body lumen. Required for optimal lysosomal function. Blocks EGF-stimulated EGFR intraluminal sorting and degradation. Conversely by binding with the phosphatidylinositol 4,5-bisphosphate, regulates its PIP5K1C interaction, inhibits HGS ubiquitination and relieves LAPTM4B inhibition of EGFR degradation. Recruits SLC3A2 and SLC7A5 (the Leu transporter) to the lysosome, promoting entry of leucine and other essential amino acid (EAA) into the lysosome, stimulating activation of proton-transporting vacuolar (V)-ATPase protein pump (V-ATPase) and hence mTORC1 activation. Plays a role as negative regulator of TGFB1 production in regulatory T cells. Binds ceramide and facilitates its exit from late endosome in order to control cell death pathways. The chain is Lysosomal-associated transmembrane protein 4B from Mus musculus (Mouse).